A 399-amino-acid polypeptide reads, in one-letter code: Elongation factor Tu (399 aa).

The region spanning 10–207 (KPHLNIGTIG…AVDNYVPEPQ (198 aa)) is the tr-type G domain. The G1 stretch occupies residues 19–26 (GHIDHGKT). 19-26 (GHIDHGKT) is a binding site for GTP. Threonine 26 contacts Mg(2+). The G2 stretch occupies residues 60–64 (GITIN). The interval 81–84 (DCPG) is G3. GTP is bound by residues 81 to 85 (DCPGH) and 136 to 139 (NKVD). The G4 stretch occupies residues 136-139 (NKVD). Residues 174-176 (SAL) are G5.

This sequence belongs to the TRAFAC class translation factor GTPase superfamily. Classic translation factor GTPase family. EF-Tu/EF-1A subfamily. In terms of assembly, monomer.

The protein resides in the cytoplasm. The enzyme catalyses GTP + H2O = GDP + phosphate + H(+). Functionally, GTP hydrolase that promotes the GTP-dependent binding of aminoacyl-tRNA to the A-site of ribosomes during protein biosynthesis. The sequence is that of Elongation factor Tu from Kosmotoga olearia (strain ATCC BAA-1733 / DSM 21960 / TBF 19.5.1).